A 656-amino-acid polypeptide reads, in one-letter code: Translation factor GUF1, mitochondrial (656 aa).

A mitochondrion-targeting transit peptide spans 1-28 (MWKGLLQSTRAAWRGPCVRAPRLPFFRR). Positions 55-235 (ERYRNFSIVA…NVIENIPGPD (181 aa)) constitute a tr-type G domain. GTP contacts are provided by residues 64 to 71 (AHVDHGKS), 128 to 132 (DTPGH), and 182 to 185 (NKID).

The protein belongs to the TRAFAC class translation factor GTPase superfamily. Classic translation factor GTPase family. LepA subfamily.

The protein localises to the mitochondrion inner membrane. It catalyses the reaction GTP + H2O = GDP + phosphate + H(+). Promotes mitochondrial protein synthesis. May act as a fidelity factor of the translation reaction, by catalyzing a one-codon backward translocation of tRNAs on improperly translocated ribosomes. Binds to mitochondrial ribosomes in a GTP-dependent manner. This chain is Translation factor GUF1, mitochondrial, found in Yarrowia lipolytica (strain CLIB 122 / E 150) (Yeast).